A 92-amino-acid polypeptide reads, in one-letter code: UPF0250 protein PD_0532 (92 aa).

Belongs to the UPF0250 family.

The protein is UPF0250 protein PD_0532 of Xylella fastidiosa (strain Temecula1 / ATCC 700964).